The chain runs to 135 residues: uncharacterized protein (135 aa).

This is an uncharacterized protein from Commelina yellow mottle virus (CoYMV).